Consider the following 188-residue polypeptide: Gamma-glutamylcyclotransferase (188 aa).

19 to 24 (YFAYGS) serves as a coordination point for substrate. Residue Glu-98 is the Proton acceptor of the active site. Tyr-139 is a substrate binding site. Position 173 is a phosphoserine (Ser-173).

Belongs to the gamma-glutamylcyclotransferase family. Homodimer.

It catalyses the reaction an alpha-(gamma-L-glutamyl)-L-amino acid = 5-oxo-L-proline + an L-alpha-amino acid. Its function is as follows. Catalyzes the formation of 5-oxoproline from gamma-glutamyl dipeptides and may play a significant role in glutathione homeostasis. Induces release of cytochrome c from mitochondria with resultant induction of apoptosis. The sequence is that of Gamma-glutamylcyclotransferase from Homo sapiens (Human).